Here is a 192-residue protein sequence, read N- to C-terminus: uncharacterized protein (192 aa).

The signal sequence occupies residues 1–17 (MFKKILFPLVALFMLAG). A lipid anchor (N-palmitoyl cysteine) is attached at Cys18. Cys18 carries S-diacylglycerol cysteine lipidation.

This sequence to H.influenzae HI_0162.

Its subcellular location is the cell membrane. This is an uncharacterized protein from Escherichia coli O6:H1 (strain CFT073 / ATCC 700928 / UPEC).